The sequence spans 519 residues: (3S,6E)-nerolidol synthase 1 (519 aa).

Positions 273, 277, 417, 421, and 425 each coordinate Mg(2+). The DDXXD motif signature appears at 273–277; it reads DDIFD.

Belongs to the terpene synthase family. Tpsg subfamily. Requires Mg(2+) as cofactor. Mn(2+) serves as cofactor. As to expression, expressed in receptacle tissue. Not detected in leaves or green fruit.

Its subcellular location is the cytoplasm. It localises to the cytosol. The enzyme catalyses (2E,6E)-farnesyl diphosphate + H2O = (3S,6E)-nerolidol + diphosphate. The protein operates within secondary metabolite biosynthesis; terpenoid biosynthesis. Functionally, involved in monoterpene (C10) and sesquiterpene (C15) biosynthesis. Converts geranyl diphosphate (GPP) into S-linalool and farnesyl diphosphate (FPP) into (3S)-E-nerolidol. Exclusively present and highly expressed in the fruit of cultivated (octaploid) varieties. The polypeptide is (3S,6E)-nerolidol synthase 1 (Fragaria ananassa (Strawberry)).